Consider the following 225-residue polypeptide: Small ribosomal subunit protein uS3 (225 aa).

In terms of domain architecture, KH type-2 spans 38 to 106 (IRKFVQNRFN…PVNLNIIEVK (69 aa)).

Belongs to the universal ribosomal protein uS3 family. As to quaternary structure, part of the 30S ribosomal subunit. Forms a tight complex with proteins S10 and S14.

In terms of biological role, binds the lower part of the 30S subunit head. Binds mRNA in the 70S ribosome, positioning it for translation. The chain is Small ribosomal subunit protein uS3 from Leptospira interrogans serogroup Icterohaemorrhagiae serovar copenhageni (strain Fiocruz L1-130).